The following is a 433-amino-acid chain: MSISLKISHISSFSNDGFNSVKQCRVSQRFEIRSVCFRRSPGVESRRIHLNSDLSSRNLRNRCVGSDVVTGEISGRSIPDWAYSGVKDETLSDLEPELDDGDGGDENGNNDGGGNGGNGDGGGGGGDGEGDDGEDEADKAEEKEFGPILKFEEVMKETERRGITLPEDMLEAAKSVGIRKLFLLRYLDLQGSVWPLGFLMRSCAMLRNRMLADPSFLFKVGTEVAIDSCCATFAEVQKRGEDFWSEFELYAADLLVGLVVDVALVGLLAPYARIGKPSVASTGLFKDLKRACASLPSSVFEAERPGCKFSVNQRIATFFYKGLLYGSVGFGCGLIGQGIANLIMTAKRSVKKSEEDVPIPPLFESAALWGVFLGLSSNARYQIINGLERVVEGSTAAKRIPVVAMAFTVGVRFANNVYGGMQFVDWAKLSGVQ.

Residues 1 to 63 (MSISLKISHI…LSSRNLRNRC (63 aa)) constitute a chloroplast transit peptide. N-acetylvaline is present on V64. Over residues 93 to 105 (DLEPELDDGDGGD) the composition is skewed to acidic residues. The segment at 93–143 (DLEPELDDGDGGDENGNNDGGGNGGNGDGGGGGGDGEGDDGEDEADKAEEK) is disordered. A compositionally biased stretch (gly residues) spans 110 to 127 (NDGGGNGGNGDGGGGGGD). Acidic residues predominate over residues 128 to 139 (GEGDDGEDEADK). The next 2 helical transmembrane spans lie at 249–269 (LYAADLLVGLVVDVALVGLLA) and 323–343 (LLYGSVGFGCGLIGQGIANLI).

This sequence belongs to the RETICULATA family. As to expression, expressed in root vasculature, distal region of young leaf primordia, leaf bundle sheath cells, hydathodes and pollen grains.

The protein resides in the plastid. It is found in the chloroplast membrane. May play a role in leaf development. The protein is Protein RETICULATA-RELATED 1, chloroplastic of Arabidopsis thaliana (Mouse-ear cress).